We begin with the raw amino-acid sequence, 348 residues long: Killer cell immunoglobulin-like receptor 2DL2 (348 aa).

Positions 1 to 21 are cleaved as a signal peptide; sequence MSLMVVSMACVGFFLLQGAWP. Residues 22–245 are Extracellular-facing; sequence HEGVHRKPSL…SKTGNPRHLH (224 aa). 2 consecutive Ig-like C2-type domains span residues 42–107 and 142–205; these read EETV…VTHS and GESV…FRDS. Intrachain disulfides connect C49/C100 and C149/C198. N84, N178, and N211 each carry an N-linked (GlcNAc...) asparagine glycan. A helical membrane pass occupies residues 246 to 264; it reads ILIGTSVVIILFILLFFLL. Residues 265-348 are Cytoplasmic-facing; that stretch reads HRWCSNKKNA…ESRSKVVSCP (84 aa).

This sequence belongs to the immunoglobulin superfamily.

The protein resides in the cell membrane. Receptor on natural killer (NK) cells for HLA-Cw1, 3, 7, and 8 allotypes. Inhibits the activity of NK cells thus preventing cell lysis. In Homo sapiens (Human), this protein is Killer cell immunoglobulin-like receptor 2DL2.